We begin with the raw amino-acid sequence, 330 residues long: tRNA N6-adenosine threonylcarbamoyltransferase (330 aa).

Fe cation is bound by residues His-110 and His-114. Substrate-binding positions include Met-133 to Gly-137, Asp-166, Gly-179, Asp-183, and Asn-271. Residue Asp-299 coordinates Fe cation.

Belongs to the KAE1 / TsaD family. The cofactor is Fe(2+).

Its subcellular location is the cytoplasm. The catalysed reaction is L-threonylcarbamoyladenylate + adenosine(37) in tRNA = N(6)-L-threonylcarbamoyladenosine(37) in tRNA + AMP + H(+). Functionally, required for the formation of a threonylcarbamoyl group on adenosine at position 37 (t(6)A37) in tRNAs that read codons beginning with adenine. Is involved in the transfer of the threonylcarbamoyl moiety of threonylcarbamoyl-AMP (TC-AMP) to the N6 group of A37, together with TsaE and TsaB. TsaD likely plays a direct catalytic role in this reaction. The protein is tRNA N6-adenosine threonylcarbamoyltransferase of Thermosipho africanus (strain TCF52B).